Reading from the N-terminus, the 422-residue chain is UDP-N-acetylglucosamine 1-carboxyvinyltransferase (422 aa).

22–23 serves as a coordination point for phosphoenolpyruvate; it reads KN. Residue arginine 93 participates in UDP-N-acetyl-alpha-D-glucosamine binding. Residue cysteine 117 is the Proton donor of the active site. The residue at position 117 (cysteine 117) is a 2-(S-cysteinyl)pyruvic acid O-phosphothioketal. UDP-N-acetyl-alpha-D-glucosamine-binding positions include 122-126, aspartate 305, and isoleucine 327; that span reads RPVDQ.

It belongs to the EPSP synthase family. MurA subfamily.

Its subcellular location is the cytoplasm. It catalyses the reaction phosphoenolpyruvate + UDP-N-acetyl-alpha-D-glucosamine = UDP-N-acetyl-3-O-(1-carboxyvinyl)-alpha-D-glucosamine + phosphate. It functions in the pathway cell wall biogenesis; peptidoglycan biosynthesis. In terms of biological role, cell wall formation. Adds enolpyruvyl to UDP-N-acetylglucosamine. The polypeptide is UDP-N-acetylglucosamine 1-carboxyvinyltransferase (Bordetella petrii (strain ATCC BAA-461 / DSM 12804 / CCUG 43448)).